The primary structure comprises 381 residues: Succinate--CoA ligase [ADP-forming] subunit beta (381 aa).

The region spanning Lys-9 to Asp-236 is the ATP-grasp domain. ATP contacts are provided by residues Lys-45, Gly-52–Gly-54, Ala-94, and Glu-99. Mg(2+) is bound by residues Asn-191 and Asp-205. Substrate contacts are provided by residues Asn-256 and Gly-313–Thr-315.

This sequence belongs to the succinate/malate CoA ligase beta subunit family. As to quaternary structure, heterotetramer of two alpha and two beta subunits. It depends on Mg(2+) as a cofactor.

The catalysed reaction is succinate + ATP + CoA = succinyl-CoA + ADP + phosphate. It carries out the reaction GTP + succinate + CoA = succinyl-CoA + GDP + phosphate. It functions in the pathway carbohydrate metabolism; tricarboxylic acid cycle; succinate from succinyl-CoA (ligase route): step 1/1. Its function is as follows. Succinyl-CoA synthetase functions in the citric acid cycle (TCA), coupling the hydrolysis of succinyl-CoA to the synthesis of either ATP or GTP and thus represents the only step of substrate-level phosphorylation in the TCA. The beta subunit provides nucleotide specificity of the enzyme and binds the substrate succinate, while the binding sites for coenzyme A and phosphate are found in the alpha subunit. The sequence is that of Succinate--CoA ligase [ADP-forming] subunit beta from Gemmatimonas aurantiaca (strain DSM 14586 / JCM 11422 / NBRC 100505 / T-27).